The primary structure comprises 458 residues: UPF0210 protein MmarC5_0151 (458 aa).

This sequence belongs to the UPF0210 family.

In Methanococcus maripaludis (strain C5 / ATCC BAA-1333), this protein is UPF0210 protein MmarC5_0151.